We begin with the raw amino-acid sequence, 207 residues long: MHKIINHPLIKDKLTRMRKVSTVSTVFRTNLEELTQLMVYEATKDLELNEIEIETPVVKNAKGYKLKNKICLIPILRAGIGMVDGVKSLIPTATIGHIGLYRNEETLKPVEYFKKFPKNISESDVIILDPMLATGGSVVEAVNIIKKYNPKSIKFVCIVAAPEGLEYVQKIHPDVDVYIAALDDKLNENGYITPGLGDAGDRIFGTK.

Residues Arg77, Arg102, and 129-137 each bind 5-phospho-alpha-D-ribose 1-diphosphate; that span reads DPMLATGGS. Uracil is bound by residues Ile192 and 197 to 199; that span reads GDA. A 5-phospho-alpha-D-ribose 1-diphosphate-binding site is contributed by Asp198.

It belongs to the UPRTase family. It depends on Mg(2+) as a cofactor.

It catalyses the reaction UMP + diphosphate = 5-phospho-alpha-D-ribose 1-diphosphate + uracil. The protein operates within pyrimidine metabolism; UMP biosynthesis via salvage pathway; UMP from uracil: step 1/1. Allosterically activated by GTP. In terms of biological role, catalyzes the conversion of uracil and 5-phospho-alpha-D-ribose 1-diphosphate (PRPP) to UMP and diphosphate. The polypeptide is Uracil phosphoribosyltransferase (Ureaplasma urealyticum serovar 10 (strain ATCC 33699 / Western)).